Consider the following 868-residue polypeptide: Translation initiation factor IF-2 (868 aa).

2 stretches are compositionally biased toward basic and acidic residues: residues 156–166 (ETVKEEEKINS) and 199–209 (SKKEEVKPEKV). Disordered stretches follow at residues 156-177 (ETVK…QDEL) and 199-269 (SKKE…KYRE). Residues 249-260 (RGGRSKFKKKKG) are compositionally biased toward basic residues. In terms of domain architecture, tr-type G spans 368–537 (GRAPVVTIMG…LLQSEVLELK (170 aa)). A G1 region spans residues 377-384 (GHVDHGKT). 377-384 (GHVDHGKT) is a GTP binding site. Positions 402–406 (GITQH) are G2. A G3 region spans residues 423–426 (DTPG). GTP-binding positions include 423 to 427 (DTPGH) and 477 to 480 (NKMD). The interval 477–480 (NKMD) is G4. The G5 stretch occupies residues 513-515 (SAK).

The protein belongs to the TRAFAC class translation factor GTPase superfamily. Classic translation factor GTPase family. IF-2 subfamily.

It localises to the cytoplasm. In terms of biological role, one of the essential components for the initiation of protein synthesis. Protects formylmethionyl-tRNA from spontaneous hydrolysis and promotes its binding to the 30S ribosomal subunits. Also involved in the hydrolysis of GTP during the formation of the 70S ribosomal complex. This is Translation initiation factor IF-2 from Legionella pneumophila subsp. pneumophila (strain Philadelphia 1 / ATCC 33152 / DSM 7513).